A 505-amino-acid chain; its full sequence is L-carnitine/gamma-butyrobetaine antiporter (505 aa).

12 helical membrane passes run 10 to 30 (IEPKVFFPPLIIVGILCWLTV), 51 to 71 (WGWAFEWYMIVMLFGWFWLVF), 92 to 112 (IFMMFASCTSAAVLFWGSIEI), 143 to 163 (GPLPWATYSFLSVAFAYFFFV), 195 to 215 (FYLVALIFAMGTSLGLATPLV), 231 to 251 (LDAIIITCWIILNAICVACGL), 263 to 283 (SYLSFLMLGWVFIVSGASFIM), 316 to 336 (WTVFYWAWWVIYAIQMSIFLA), 347 to 367 (LCFGMVMGLTASTWILWTVLG), 403 to 423 (LSTATMWGFFILCFIATVTLI), 446 to 466 (LLVRIGWSVLVGIIGIVLLAL), and 475 to 495 (AIIAGGCPLFFVNIMVTLSFI).

This sequence belongs to the BCCT transporter (TC 2.A.15) family. CaiT subfamily. As to quaternary structure, homotrimer.

It localises to the cell inner membrane. The catalysed reaction is 4-(trimethylamino)butanoate(in) + (R)-carnitine(out) = 4-(trimethylamino)butanoate(out) + (R)-carnitine(in). Its pathway is amine and polyamine metabolism; carnitine metabolism. In terms of biological role, catalyzes the exchange of L-carnitine for gamma-butyrobetaine. The polypeptide is L-carnitine/gamma-butyrobetaine antiporter (Salmonella gallinarum (strain 287/91 / NCTC 13346)).